A 330-amino-acid chain; its full sequence is Phytanoyl-CoA hydroxylase-interacting protein (330 aa).

The Fibronectin type-III domain maps to 6 to 115 (TPHSIEVSNI…ETVEFCTGDY (110 aa)). Residues N14 and N325 are each glycosylated (N-linked (GlcNAc...) asparagine).

The protein belongs to the PHYHIP family. As to quaternary structure, interacts with PHYH and ADGRB1.

Its interaction with PHYH suggests a role in the development of the central system. This is Phytanoyl-CoA hydroxylase-interacting protein (PHYHIP) from Bos taurus (Bovine).